Reading from the N-terminus, the 113-residue chain is Small ribosomal subunit protein uS17 (113 aa).

Belongs to the universal ribosomal protein uS17 family. Part of the 30S ribosomal subunit.

One of the primary rRNA binding proteins, it binds specifically to the 5'-end of 16S ribosomal RNA. The protein is Small ribosomal subunit protein uS17 of Pyrococcus abyssi (strain GE5 / Orsay).